Consider the following 353-residue polypeptide: Polycomb group RING finger protein 6 (353 aa).

Positions 1–116 (MDEAETDATE…FSLRLESGRA (116 aa)) are disordered. Positions 9–19 (TENKRASEAKR) are enriched in basic and acidic residues. The span at 23–39 (MPPPPPPPPPISPPALI) shows a compositional bias: pro residues. Ser34 carries the post-translational modification Phosphoserine. Low complexity predominate over residues 40-52 (PAPAAGEEGPASL). Residues 69 to 82 (EPERSLGRLRGRFE) are compositionally biased toward basic and acidic residues. Residues 71–112 (ERSLGRLRGRFEDYDEELEEEEEMEEEEEEEEEMSHFSLRLE) are a coiled coil. The segment covering 83 to 103 (DYDEELEEEEEMEEEEEEEEE) has biased composition (acidic residues). Ser118 is subject to Phosphoserine. The segment at 137-176 (CSICKGYLIDATTITECLHTFCKSCIVRHFYYSNRCPKCN) adopts an RING-type zinc-finger fold. Glycyl lysine isopeptide (Lys-Gly) (interchain with G-Cter in SUMO2) cross-links involve residues Lys226 and Lys237.

As to quaternary structure, component of a PRC1-like complex. Interacts with BMI1/PCGF4, RING1 and RNF2. Interacts with KDM5D. Interacts with CBX4, CBX6, CBX7 and CBX8. Post-translationally, phosphorylated during mitosis. Expressed in ovary, testis, stomach, liver, thymus and kidney (at protein level).

It localises to the nucleus. In terms of biological role, transcriptional repressor. May modulate the levels of histone H3K4Me3 by activating KDM5D histone demethylase. Component of a Polycomb group (PcG) multiprotein PRC1-like complex, a complex class required to maintain the transcriptionally repressive state of many genes, including Hox genes, throughout development. PcG PRC1 complex acts via chromatin remodeling and modification of histones; it mediates monoubiquitination of histone H2A 'Lys-119', rendering chromatin heritably changed in its expressibility. Within the PRC1-like complex, regulates RNF2 ubiquitin ligase activity. The protein is Polycomb group RING finger protein 6 (Pcgf6) of Mus musculus (Mouse).